Reading from the N-terminus, the 31-residue chain is Mu-conotoxin SmIIIA (31 aa).

The propeptide occupies 1–6 (PLFDKR). Glutamine 7 carries the post-translational modification Pyrrolidone carboxylic acid. 3 disulfides stabilise this stretch: cysteine 9-cysteine 21, cysteine 10-cysteine 27, and cysteine 16-cysteine 28. Cysteine 28 carries the post-translational modification Cysteine amide.

Belongs to the conotoxin M superfamily. In terms of processing, smIIIA' is a putative isoform where the N-terminal AA is missing. In terms of tissue distribution, expressed by the venom duct.

It localises to the secreted. In terms of biological role, mu-conotoxins block voltage-gated sodium channels (Nav). This toxin blocks rNav1.5/SCN5A (IC(50) is 1.3 uM), rNav1.6/SCN8A (IC(50) is 160 nM), rNav1.7/SCN9A (IC(50) is 1.3 uM), rNav1.1/SCN1A (K(d) is 3.8 nM), rNav1.2/SCN2A (K(d) is 1.3 nM), rNav1.4/SCN4A (K(d) is 0.22 nM), rNav1.6/SCN8A (K(d) is 69 nM), and rNav1.7/SCN9A (K(d) is 260 nM). This toxin is very potent but weakly discriminating among sodium channels. The block of these channels is modified when beta-subunits are coexpressed with alpha subunits. Hence, blocks of channels containing beta-1 and beta-3 subunits are more potent (compared to channels without beta subunits), whereas blocks of channels containing beta-2 and beta-4 subunits are less potent (compared to channels without beta subunits). This is Mu-conotoxin SmIIIA from Conus stercusmuscarum (Fly-specked cone).